A 772-amino-acid polypeptide reads, in one-letter code: MLRTIILKAGSNASIPSPSRQNKLLRFFATAGAVSRTSPGSIKKIFDDNSYWRNINGQDANNSKISQYLFKKNKTGLFKNPYLTSPDGLRKFSQVSLQQAQELLDKMRNDFSESGKLTYIMNLDRLSDTLCRVIDLCEFIRSTHPDDAFVRAAQDCHEQMFEFMNVLNTDVSLCNILKSVLNNPEVSSKLSAEELKVGKILLDDFEKSGIYMNPDVREKFIQLSQEISLVGQEFINHTDYPGSNSVKIPCKDLDNSKVSTFLLKQLNKDVKGQNYKVPTFGYAAYALLKSCENEMVRKKLWTALHSCSDKQVKRLSHLIKLRAILANLMHKTSYAEYQLEGKMAKNPKDVQDFILTLMNNTIEKTANELKFIAELKAKDLKKPLTTNTDEILKLVRPWDRDYYTGKYFQLNPSNSPNAKEISYYFTLGNVIQGLSDLFQQIYGIRLEPAITDEGETWSPDVRRLNVISEEEGIIGIIYCDLFERNGKTSNPAHFTVCCSRQIYPSETDFSTIQVGENPDGTYFQLPVISLVCNFSPILIASKKSLCFLQLSEVETLFHEMGHAMHSMLGRTHMQNISGTRCATDFVELPSILMEHFAKDIRILTKIGKHYGTGETIQADMLQRFMKSTNFLQNCETYSQAKMAMLDQSFHDEKIISDIDNFDVVENYQALERRLKVLVDDQSNWCGRFGHLFGYGATYYSYLFDRTIASKIWYALFEDDPYSRKNGDKFKKHLLKWGGLKDPWKCIADVLECPMLEKGGSDAMEFIAQSHKS.

The N-terminal 37 residues, methionine 1–threonine 37, are a transit peptide targeting the mitochondrion. Histidine 558 provides a ligand contact to Zn(2+). The active site involves glutamate 559. Residues histidine 562 and glutamate 587 each contribute to the Zn(2+) site.

It belongs to the peptidase M3 family. Requires Zn(2+) as cofactor.

The protein localises to the mitochondrion matrix. It catalyses the reaction Release of an N-terminal octapeptide as second stage of processing of some proteins imported into the mitochondrion.. Stimulated by Fe(2+). Functionally, cleaves proteins, imported into the mitochondrion, to their mature size. While most mitochondrial precursor proteins are processed to the mature form in one step by mitochondrial processing peptidase (MPP), the sequential cleavage by MIP of an octapeptide after initial processing by MPP is a required step for a subgroup of nuclear-encoded precursor proteins destined for the matrix or the inner membrane. Cleaves precursor proteins of respiratory components, including subunits of the electron transport chain and tricarboxylic acid cycle enzymes, and components of the mitochondrial genetic machinery, including ribosomal proteins, translation factors, and proteins required for mitochondrial DNA metabolism. The sequence is that of Mitochondrial intermediate peptidase (OCT1) from Saccharomyces cerevisiae (strain ATCC 204508 / S288c) (Baker's yeast).